The chain runs to 135 residues: Protein E6 (135 aa).

2 zinc fingers span residues 11 to 47 (CVFCYCVLGKVEARRCYDKKIRTVVRGGLRCAVCTAC) and 83 to 119 (CMYCGGILTRDEKDRHRYFEELYVIFRNQVLGRCYTC).

Belongs to the papillomaviridae E6 protein family. In terms of assembly, forms homodimers. Interacts with ubiquitin-protein ligase UBE3A/E6-AP; this interaction stimulates UBE3A ubiquitin activity. Interacts with host BAK1.

Its subcellular location is the host cytoplasm. It localises to the host nucleus. In terms of biological role, plays a major role in the induction and maintenance of cellular transformation. E6 associates with host UBE3A/E6-AP ubiquitin-protein ligase and modulates its activity. Protects host keratinocytes from apoptosis by mediating the degradation of host BAK1. May also inhibit host immune response. The chain is Protein E6 from Odocoileus virginianus papillomavirus 1 (DPV).